The following is a 184-amino-acid chain: NADH-quinone oxidoreductase subunit B (184 aa).

Cysteine 63, cysteine 64, cysteine 128, and cysteine 158 together coordinate [4Fe-4S] cluster.

The protein belongs to the complex I 20 kDa subunit family. NDH-1 is composed of 14 different subunits. Subunits NuoB, C, D, E, F, and G constitute the peripheral sector of the complex. [4Fe-4S] cluster serves as cofactor.

It is found in the cell inner membrane. The catalysed reaction is a quinone + NADH + 5 H(+)(in) = a quinol + NAD(+) + 4 H(+)(out). Functionally, NDH-1 shuttles electrons from NADH, via FMN and iron-sulfur (Fe-S) centers, to quinones in the respiratory chain. The immediate electron acceptor for the enzyme in this species is believed to be ubiquinone. Couples the redox reaction to proton translocation (for every two electrons transferred, four hydrogen ions are translocated across the cytoplasmic membrane), and thus conserves the redox energy in a proton gradient. The polypeptide is NADH-quinone oxidoreductase subunit B (Xylella fastidiosa (strain M12)).